The following is a 154-amino-acid chain: Nitrogen regulatory protein (154 aa).

The 145-residue stretch at 6 to 150 (QILTPGRSLV…EALYQIVVDV (145 aa)) folds into the PTS EIIA type-2 domain. H68 functions as the Tele-phosphohistidine intermediate in the catalytic mechanism.

It is found in the cytoplasm. In terms of biological role, seems to have a role in regulating nitrogen assimilation. The sequence is that of Nitrogen regulatory protein (ptsN) from Pseudomonas aeruginosa (strain ATCC 15692 / DSM 22644 / CIP 104116 / JCM 14847 / LMG 12228 / 1C / PRS 101 / PAO1).